The primary structure comprises 2339 residues: Voltage-dependent N-type calcium channel subunit alpha-1B (2339 aa).

Residues 1-90 are Cytoplasmic-facing; the sequence is MVRFGDELGG…DNVVRKYAKR (90 aa). The span at 15-34 shows a compositional bias: gly residues; sequence AGGAERARGGGAGGAGGPGP. The segment at 15 to 37 is disordered; the sequence is AGGAERARGGGAGGAGGPGPGGL. At Arg22 the chain carries Omega-N-methylarginine. Residues 82–359 form an I repeat; sequence NVVRKYAKRI…LVLGVLSGEF (278 aa). The helical transmembrane segment at 91–114 threads the bilayer; it reads ITEWPPFEYMILATIIANCIVLAL. Residues 115-131 lie on the Extracellular side of the membrane; sequence EQHLPDGDKTPMSERLD. Residues 132 to 152 traverse the membrane as a helical segment; that stretch reads DTEPYFIGIFCFEAGIKILAL. The Cytoplasmic portion of the chain corresponds to 153–163; it reads GFVLHKGSYLR. The chain crosses the membrane as a helical span at residues 164-182; the sequence is NGWNVMDFVVVLTGILATA. Over 183–187 the chain is Extracellular; the sequence is GTDFD. A helical transmembrane segment spans residues 188 to 211; the sequence is LRTLRAVRVLRPLKLVSGIPSLQV. The Cytoplasmic segment spans residues 212–221; that stretch reads VLKSIMKAMV. Residues 222-244 form a helical membrane-spanning segment; sequence PLLQIGLLLFFAILMFAIIGLEF. At 245 to 331 the chain is on the extracellular side; sequence YMGKFHKACF…NTNDAAGNTW (87 aa). Asn256 carries N-linked (GlcNAc...) asparagine glycosylation. Residues 332–356 traverse the membrane as a helical segment; the sequence is NWLYFIPLIIIGSFFMLNLVLGVLS. The Cytoplasmic portion of the chain corresponds to 357–483; the sequence is GEFAKERERV…FFIRRMVKAQ (127 aa). Residues 379–396 form a binding to the beta subunit region; sequence QQIERELNGYLEWIFKAE. The residue at position 411 (Ser411) is a Phosphoserine. 452–459 is a binding site for ATP; sequence ASLKSGKT. Residues 469-713 form an II repeat; the sequence is EKMFRFFIRR…VFLAIAVDNL (245 aa). Residues 484-502 form a helical membrane-spanning segment; the sequence is SFYWTVLCVVALNTLCVAM. Residues 503-512 are Extracellular-facing; sequence VHYNQPQRLT. The helical transmembrane segment at 513–535 threads the bilayer; it reads TALYFAEFVFLGLFLTEMSLKMY. The Cytoplasmic segment spans residues 536–545; that stretch reads GLGPRSYFRS. Ser545 contributes to the a 1,2-diacyl-sn-glycero-3-phospho-(1D-myo-inositol-4,5-bisphosphate) binding site. Residues 546 to 567 form a helical membrane-spanning segment; the sequence is SFNCFDFGVIVGSIFEVVWAAV. Residues 568–574 lie on the Extracellular side of the membrane; it reads KPGTSFG. A helical transmembrane segment spans residues 575–587; that stretch reads ISVLRALRLLRIF. Residues Arg585 and Lys588 each contribute to the a 1,2-diacyl-sn-glycero-3-phospho-(1D-myo-inositol-4,5-bisphosphate) site. Residues 588–605 lie on the Cytoplasmic side of the membrane; that stretch reads KVTKYWNSLRNLVVSLLN. A helical transmembrane segment spans residues 606–631; sequence SMKSIISLLFLLFLFIVVFALLGMQL. The Extracellular segment spans residues 632-683; that stretch reads FGGQFNFKDETPTTNFDTFPAAILTVFQILTGEDWNAVMYHGIESQGGVSRG. Residues 684-710 form a helical membrane-spanning segment; it reads MFSSFYFIVLTLFGNYTLLNVFLAIAV. Over 711–1156 the chain is Cytoplasmic; sequence DNLANAQELT…CCHYIVTMRY (446 aa). Residues Ser746, Ser749, and Ser784 each carry the phosphoserine modification. Basic and acidic residues-rich tracts occupy residues 809-827, 870-891, 927-937, 973-984, and 999-1026; these read DVKT…RDAP, EQDR…EERG, GSPEEAAEREP, CPREAESSEEPA, and TAEK…RNHQ. Disordered stretches follow at residues 809 to 1026 and 1056 to 1084; these read DVKT…RNHQ and VEEQ…TTVH. The segment covering 1066 to 1083 has biased composition (polar residues); sequence QRNVTRMGSQPPDTSTTV. Ser1074 carries the post-translational modification Phosphoserine. The stretch at 1142 to 1424 is one III repeat; that stretch reads NLLRRCCHYI…IFVALIIITF (283 aa). The helical transmembrane segment at 1157–1175 threads the bilayer; that stretch reads FEMVILVVIALSSIALAAE. At 1176–1183 the chain is on the extracellular side; it reads DPVRTDSP. A helical membrane pass occupies residues 1184 to 1208; it reads RNNALKYMDYIFTGVFTFEMVIKMI. The Cytoplasmic portion of the chain corresponds to 1209 to 1222; that stretch reads DLGLLLHPGAYFRD. The chain crosses the membrane as a helical span at residues 1223–1243; it reads LWNILDFIVVSGALVAFAFSG. Residues 1244-1249 are Extracellular-facing; it reads SKGKDI. Residues 1250-1270 traverse the membrane as a helical segment; sequence STIKSLRVLRVLRPLKTIKRL. Topologically, residues 1271 to 1288 are cytoplasmic; that stretch reads PKLKAVFDCVVNSLKNVL. The helical transmembrane segment at 1289–1308 threads the bilayer; sequence NILIVYMLFMFIFAVIAVQL. The Extracellular portion of the chain corresponds to 1309-1395; sequence FKGKFFYCTD…EQGPSPGYRM (87 aa). A helical membrane pass occupies residues 1396–1421; the sequence is ELSIFYVVYFVVFPFFFVNIFVALII. At 1422–1476 the chain is on the cytoplasmic side; sequence ITFQEQGDKVMSECSLEKNERACIDFAISARPLTRYMPQNKQSFQYKTWTFVVSP. The IV repeat unit spans residues 1461–1714; that stretch reads NKQSFQYKTW…LFVAVIMDNF (254 aa). The helical transmembrane segment at 1477–1495 threads the bilayer; the sequence is PFEYFIMAMIALNTVVLMM. Residues 1496-1503 are Extracellular-facing; it reads KFYDAPYE. A helical membrane pass occupies residues 1504–1528; it reads YELMLKCLNIVFTSMFSMECVLKII. Residues 1529 to 1538 lie on the Cytoplasmic side of the membrane; it reads AFGVLNYFRD. Residues 1539–1560 traverse the membrane as a helical segment; the sequence is AWNVFDFVTVLGSITDILVTEI. Over 1561 to 1566 the chain is Extracellular; it reads ANNFIN. Residue Asn1566 is glycosylated (N-linked (GlcNAc...) asparagine). A helical transmembrane segment spans residues 1567–1585; the sequence is LSFLRLFRAARLIKLLRQG. The Cytoplasmic segment spans residues 1586 to 1604; it reads YTIRILLWTFVQSFKALPY. A helical membrane pass occupies residues 1605–1624; that stretch reads VCLLIAMLFFIYAIIGMQVF. At 1625-1686 the chain is on the extracellular side; it reads GNIALDDDTS…SNASECGSDF (62 aa). Asn1678 is a glycosylation site (N-linked (GlcNAc...) asparagine). The helical transmembrane segment at 1687 to 1710 threads the bilayer; the sequence is AYFYFVSFIFLCSFLMLNLFVAVI. Topologically, residues 1711-2339 are cytoplasmic; sequence MDNFEYLTRD…CHHPDRDRRC (629 aa). The EF-hand domain maps to 1727–1762; the sequence is HHLDEFIRVWAEYDPAACGRISYSDMFEMLKHMSPP. Residues Asp1740, Arg1746, and Asp1751 each coordinate Ca(2+). The segment at 1983 to 2312 is disordered; it reads TLSGPDAEPQ…QPPPLRRVPN (330 aa). The segment covering 2050–2064 has biased composition (basic residues); it reads PHHHHHRCHRRRDRK. Phosphoserine is present on Ser2067. The span at 2099–2136 shows a compositional bias: basic and acidic residues; it reads CRRERERRQERGRSQERRQPSSSSSEKHRFYSCDRFGG. Polar residues-rich tracts occupy residues 2144-2155 and 2165-2181; these read PSLSSHPTSPTA and GSGS…SGAS. 3 positions are modified to phosphoserine: Ser2224, Ser2233, and Ser2256. The segment covering 2286–2302 has biased composition (low complexity); sequence SNSGRSSRTSYVSSLTS.

It belongs to the calcium channel alpha-1 subunit (TC 1.A.1.11) family. CACNA1B subfamily. Multisubunit complex consisting of alpha-1, alpha-2, beta and delta subunits in a 1:1:1:1 ratio. The channel activity is directed by the pore-forming and voltage-sensitive alpha-1 subunit. In many cases, this subunit is sufficient to generate voltage-sensitive calcium channel activity. The auxiliary subunits beta and alpha-2/delta linked by a disulfide bridge regulate the channel activity. Interacts with RIMS1. Interacts with FMR1 (via C-terminus); this interaction induces a decrease in the number of presynaptic functional CACNA1B channels at the cell surface. In terms of processing, phosphorylated in vitro by CaM-kinase II, PKA, PKC and CGPK. In terms of tissue distribution, widespread expression throughout the brain. Highest levels in corpus striatum and midbrain.

It is found in the membrane. It carries out the reaction Ca(2+)(in) = Ca(2+)(out). With respect to regulation, is specifically blocked by omega-conotoxin GVIA. Is specifically blocked by omega-conotoxin MVIIA (ziconotide). Is insensitive to dihydropyridines (DHP). Voltage-sensitive calcium channels (VSCC) mediate the entry of calcium ions into excitable cells and are also involved in a variety of calcium-dependent processes, including muscle contraction, hormone or neurotransmitter release, gene expression, cell motility, cell division and cell death. This alpha-1B subunit gives rise to N-type calcium currents. N-type calcium channels belong to the 'high-voltage activated' (HVA) group. They are involved in pain signaling. Calcium channels containing alpha-1B subunit may play a role in directed migration of immature neurons. Mediates Ca(2+) release probability at hippocampal neuronal soma and synaptic terminals. In Oryctolagus cuniculus (Rabbit), this protein is Voltage-dependent N-type calcium channel subunit alpha-1B (CACNA1B).